Reading from the N-terminus, the 101-residue chain is Small ribosomal subunit protein uS14 (101 aa).

The protein belongs to the universal ribosomal protein uS14 family. Part of the 30S ribosomal subunit. Contacts proteins S3 and S10.

Its function is as follows. Binds 16S rRNA, required for the assembly of 30S particles and may also be responsible for determining the conformation of the 16S rRNA at the A site. The chain is Small ribosomal subunit protein uS14 from Klebsiella pneumoniae (strain 342).